Here is a 110-residue protein sequence, read N- to C-terminus: UPF0122 protein SaurJH9_1295 (110 aa).

This sequence belongs to the UPF0122 family.

Functionally, might take part in the signal recognition particle (SRP) pathway. This is inferred from the conservation of its genetic proximity to ftsY/ffh. May be a regulatory protein. In Staphylococcus aureus (strain JH9), this protein is UPF0122 protein SaurJH9_1295.